The sequence spans 619 residues: 1-deoxy-D-xylulose-5-phosphate synthase (619 aa).

Residues His-74 and 115–117 (GHS) each bind thiamine diphosphate. Residue Asp-146 participates in Mg(2+) binding. Thiamine diphosphate is bound by residues 147–148 (GA), Asn-175, and Tyr-285. Asn-175 contacts Mg(2+). The tract at residues 289–312 (EKSPSKYHAVPPRANEKEKPSKPC) is disordered. A compositionally biased stretch (basic and acidic residues) spans 302–312 (ANEKEKPSKPC). Residue Glu-365 coordinates thiamine diphosphate.

The protein belongs to the transketolase family. DXPS subfamily. In terms of assembly, homodimer. The cofactor is Mg(2+). Thiamine diphosphate is required as a cofactor.

It carries out the reaction D-glyceraldehyde 3-phosphate + pyruvate + H(+) = 1-deoxy-D-xylulose 5-phosphate + CO2. The protein operates within metabolic intermediate biosynthesis; 1-deoxy-D-xylulose 5-phosphate biosynthesis; 1-deoxy-D-xylulose 5-phosphate from D-glyceraldehyde 3-phosphate and pyruvate: step 1/1. Functionally, catalyzes the acyloin condensation reaction between C atoms 2 and 3 of pyruvate and glyceraldehyde 3-phosphate to yield 1-deoxy-D-xylulose-5-phosphate (DXP). In Clostridium botulinum (strain Eklund 17B / Type B), this protein is 1-deoxy-D-xylulose-5-phosphate synthase.